A 427-amino-acid polypeptide reads, in one-letter code: 3-phosphoshikimate 1-carboxyvinyltransferase (427 aa).

Positions 20, 21, and 25 each coordinate 3-phosphoshikimate. Lys20 lines the phosphoenolpyruvate pocket. Phosphoenolpyruvate contacts are provided by Gly92 and Arg120. Residues Ser166, Gln168, Asp312, and Lys339 each coordinate 3-phosphoshikimate. Gln168 serves as a coordination point for phosphoenolpyruvate. The Proton acceptor role is filled by Asp312. The phosphoenolpyruvate site is built by Arg343 and Arg385.

It belongs to the EPSP synthase family. As to quaternary structure, monomer.

The protein localises to the cytoplasm. It catalyses the reaction 3-phosphoshikimate + phosphoenolpyruvate = 5-O-(1-carboxyvinyl)-3-phosphoshikimate + phosphate. Its pathway is metabolic intermediate biosynthesis; chorismate biosynthesis; chorismate from D-erythrose 4-phosphate and phosphoenolpyruvate: step 6/7. In terms of biological role, catalyzes the transfer of the enolpyruvyl moiety of phosphoenolpyruvate (PEP) to the 5-hydroxyl of shikimate-3-phosphate (S3P) to produce enolpyruvyl shikimate-3-phosphate and inorganic phosphate. This chain is 3-phosphoshikimate 1-carboxyvinyltransferase, found in Streptococcus pyogenes serotype M49 (strain NZ131).